A 401-amino-acid polypeptide reads, in one-letter code: Nodal homolog 3-C (401 aa).

Positions 1-18 are cleaved as a signal peptide; it reads MAFLSLFLCLVFSSPLMA. Residues 19 to 274 constitute a propeptide that is removed on maturation; that stretch reads MPPALQGRKA…KVNGFRRLRR (256 aa). Asparagine 168, asparagine 337, and asparagine 344 each carry an N-linked (GlcNAc...) asparagine glycan. 2 disulfide bridges follow: cysteine 299/cysteine 365 and cysteine 328/cysteine 396.

It belongs to the TGF-beta family. As to quaternary structure, monomer. The propeptide region interacts with bmp4 in a non-covalent manner. As to expression, expressed in the dorsal marginal region of late blastula, becoming restricted to the Spemann organizer at the early gastrula stage.

The protein resides in the secreted. In terms of biological role, exhibits mesoderm-dorsalizing activity and neural-inducing activity, but lacks mesoderm-inducing activity. Regulates the expression of specific mesodermal and neural genes. Induces convergent extension movements at the embryonic midline by activating the fgf signaling pathway to induce t/bra expression in the organizer region. Acts with wnt11 to induce Spemann organizer cells and induce axis formation. The unprocessed protein antagonizes bmp-signaling. The chain is Nodal homolog 3-C from Xenopus tropicalis (Western clawed frog).